The chain runs to 397 residues: Erythromycin C-12 hydroxylase (397 aa).

74–75 (HE) is a binding site for substrate. Heme contacts are provided by H81 and R85. Q278 serves as a coordination point for substrate. Residue R279 participates in heme binding. Residues 307 to 322 (RDSDAHDDPDRFDPSR) show a composition bias toward basic and acidic residues. The tract at residues 307–326 (RDSDAHDDPDRFDPSRKSGG) is disordered. Heme-binding residues include H337 and C339.

The protein belongs to the cytochrome P450 family. Monomer. Heme b serves as cofactor.

It carries out the reaction erythromycin D + NADPH + O2 + H(+) = erythromycin C + NADP(+) + H2O. The protein operates within antibiotic biosynthesis; erythromycin biosynthesis. In terms of biological role, responsible for the C-12 hydroxylation of the macrolactone ring of erythromycin. Thus, EryK catalyzes the hydroxylation of erythromycin D (ErD) at the C-12 position to produce erythromycin C (ErC). Erythromycin B (ErB) is not a substrate for this enzyme. The chain is Erythromycin C-12 hydroxylase (eryK) from Saccharopolyspora erythraea (strain ATCC 11635 / DSM 40517 / JCM 4748 / NBRC 13426 / NCIMB 8594 / NRRL 2338).